The following is an 831-amino-acid chain: Cysteine--tRNA ligase, cytoplasmic (831 aa).

N-acetylalanine is present on A2. Position 102 is a phosphoserine (S102). C138 contributes to the Zn(2+) binding site. G139 is an L-cysteine binding site. Positions 140–150 match the 'HIGH' region motif; it reads PTVYDASHMGH. T179 lines the L-cysteine pocket. The 'KIIK' region signature appears at 184–187; that stretch reads KIIR. Residues S388 and S390 each carry the phosphoserine modification. Positions 431, 456, and 460 each coordinate Zn(2+). An L-cysteine-binding site is contributed by H456. The 'KMSKS' region signature appears at 489 to 493; the sequence is KMSKS. K492 is a binding site for ATP. Over residues 736 to 762 the composition is skewed to basic and acidic residues; the sequence is GKKRAEEEKRRKKEEAARKKQEQEAAK. The segment at 736-766 is disordered; sequence GKKRAEEEKRRKKEEAARKKQEQEAAKLAKM. S829 bears the Phosphoserine mark.

It belongs to the class-I aminoacyl-tRNA synthetase family. As to quaternary structure, homodimer. Zn(2+) serves as cofactor.

It localises to the cytoplasm. It catalyses the reaction tRNA(Cys) + L-cysteine + ATP = L-cysteinyl-tRNA(Cys) + AMP + diphosphate. Functionally, catalyzes the ATP-dependent ligation of cysteine to tRNA(Cys). This is Cysteine--tRNA ligase, cytoplasmic (Cars1) from Mus musculus (Mouse).